The primary structure comprises 361 residues: Trans-2,3-enoyl-CoA reductase-like (361 aa).

2 positions are modified to phosphoserine: Ser-33 and Ser-35. 4 consecutive transmembrane segments (helical) span residues 139-159 (VGWT…YLLF), 181-201 (VHLA…ETLF), 215-235 (LIKG…YINH), and 309-329 (ISFT…LMTI).

The protein belongs to the steroid 5-alpha reductase family. As to expression, expression is highest in the heart with very low to almost undetectable levels in brain, skeletal muscle, stomach, pancreas, liver, kidney, small intestine, and uterus.

It localises to the membrane. The protein resides in the endoplasmic reticulum. This Mus musculus (Mouse) protein is Trans-2,3-enoyl-CoA reductase-like (Tecrl).